Consider the following 298-residue polypeptide: GTP cyclohydrolase FolE2 (298 aa).

It belongs to the GTP cyclohydrolase IV family.

The enzyme catalyses GTP + H2O = 7,8-dihydroneopterin 3'-triphosphate + formate + H(+). It participates in cofactor biosynthesis; 7,8-dihydroneopterin triphosphate biosynthesis; 7,8-dihydroneopterin triphosphate from GTP: step 1/1. Converts GTP to 7,8-dihydroneopterin triphosphate. This is GTP cyclohydrolase FolE2 from Neisseria meningitidis serogroup B (strain ATCC BAA-335 / MC58).